A 363-amino-acid polypeptide reads, in one-letter code: Trans-2,3-enoyl-CoA reductase-like (363 aa).

Serine 37 is subject to Phosphoserine. The next 4 membrane-spanning stretches (helical) occupy residues 143–163 (WTTV…LFYL), 216–235 (NLLK…AYYI), 250–270 (VAIS…INVV), and 311–331 (ISFT…LMSI).

This sequence belongs to the steroid 5-alpha reductase family.

It is found in the membrane. The protein resides in the endoplasmic reticulum. The chain is Trans-2,3-enoyl-CoA reductase-like (TECRL) from Bos taurus (Bovine).